The primary structure comprises 247 residues: Cytochrome c oxidase subunit 2 (247 aa).

At 1–38 the chain is on the mitochondrial intermembrane side; that stretch reads MREMMMNNMLNDVPTPWAMYFQDSATPNMEGMMELHNN. Residues 39-55 form a helical membrane-spanning segment; the sequence is VLFYLCVMLGFVTYMLY. Residues 56–86 are Mitochondrial matrix-facing; sequence NVMTVYNKSAMAYKYMNHGQFMEMMWTTFPA. A helical transmembrane segment spans residues 87-103; it reads MMLLMMAFPSFMLLYMC. Over 104 to 247 the chain is Mitochondrial intermembrane; it reads DEVMAPAMTI…VDFLAWIDEQ (144 aa). Cu cation contacts are provided by His182, Cys217, Glu219, Cys221, His225, and Met228. A Mg(2+)-binding site is contributed by Glu219.

The protein belongs to the cytochrome c oxidase subunit 2 family. In terms of assembly, component of the cytochrome c oxidase (complex IV, CIV), a multisubunit enzyme composed of a catalytic core of 3 subunits and several supernumerary subunits. The complex exists as a monomer or a dimer and forms supercomplexes (SCs) in the inner mitochondrial membrane with ubiquinol-cytochrome c oxidoreductase (cytochrome b-c1 complex, complex III, CIII). Cu cation is required as a cofactor.

The protein resides in the mitochondrion inner membrane. It catalyses the reaction 4 Fe(II)-[cytochrome c] + O2 + 8 H(+)(in) = 4 Fe(III)-[cytochrome c] + 2 H2O + 4 H(+)(out). Component of the cytochrome c oxidase, the last enzyme in the mitochondrial electron transport chain which drives oxidative phosphorylation. The respiratory chain contains 3 multisubunit complexes succinate dehydrogenase (complex II, CII), ubiquinol-cytochrome c oxidoreductase (cytochrome b-c1 complex, complex III, CIII) and cytochrome c oxidase (complex IV, CIV), that cooperate to transfer electrons derived from NADH and succinate to molecular oxygen, creating an electrochemical gradient over the inner membrane that drives transmembrane transport and the ATP synthase. Cytochrome c oxidase is the component of the respiratory chain that catalyzes the reduction of oxygen to water. Electrons originating from reduced cytochrome c in the intermembrane space (IMS) are transferred via the dinuclear copper A center (CU(A)) of subunit 2 and heme A of subunit 1 to the active site in subunit 1, a binuclear center (BNC) formed by heme A3 and copper B (CU(B)). The BNC reduces molecular oxygen to 2 water molecules using 4 electrons from cytochrome c in the IMS and 4 protons from the mitochondrial matrix. The protein is Cytochrome c oxidase subunit 2 (COX2) of Eeniella nana (Yeast).